Reading from the N-terminus, the 274-residue chain is DNA-directed RNA polymerase subunit Rpo3 (274 aa).

3 residues coordinate [3Fe-4S] cluster: Cys202, Cys205, and Cys208.

The protein belongs to the archaeal Rpo3/eukaryotic RPB3 RNA polymerase subunit family. In terms of assembly, part of the RNA polymerase complex. [3Fe-4S] cluster serves as cofactor.

The protein resides in the cytoplasm. It catalyses the reaction RNA(n) + a ribonucleoside 5'-triphosphate = RNA(n+1) + diphosphate. Its function is as follows. DNA-dependent RNA polymerase (RNAP) catalyzes the transcription of DNA into RNA using the four ribonucleoside triphosphates as substrates. This chain is DNA-directed RNA polymerase subunit Rpo3, found in Methanobrevibacter smithii (strain ATCC 35061 / DSM 861 / OCM 144 / PS).